We begin with the raw amino-acid sequence, 365 residues long: tRNA-specific 2-thiouridylase MnmA (365 aa).

ATP contacts are provided by residues 6 to 13 (AMSGGVDS) and leucine 32. The Nucleophile role is filled by cysteine 101. Cysteine 101 and cysteine 199 form a disulfide bridge. Glycine 125 is an ATP binding site. The tract at residues 149-151 (KDQ) is interaction with tRNA. Catalysis depends on cysteine 199, which acts as the Cysteine persulfide intermediate.

This sequence belongs to the MnmA/TRMU family.

The protein resides in the cytoplasm. It carries out the reaction S-sulfanyl-L-cysteinyl-[protein] + uridine(34) in tRNA + AH2 + ATP = 2-thiouridine(34) in tRNA + L-cysteinyl-[protein] + A + AMP + diphosphate + H(+). In terms of biological role, catalyzes the 2-thiolation of uridine at the wobble position (U34) of tRNA, leading to the formation of s(2)U34. This Corynebacterium efficiens (strain DSM 44549 / YS-314 / AJ 12310 / JCM 11189 / NBRC 100395) protein is tRNA-specific 2-thiouridylase MnmA.